The sequence spans 747 residues: MAEAVERTDELVREYLLFRGFTHTLRQLDAEIKADKEKGFRVDKIVDQLQQLMQVYDLAALRDYWSYLERRLFSRLEDIYRPTINKLKTSLFRFYLVYTIQTNRNDKAQEFFAKQATELQNQAEWKDWFVLPFLPSPDTNPTFATYFSRQWADTFIISLHNFLSVLFQCMPVPVILNFDAECQRTNQVQEENEVLRQKLFALQAEVHRLKKEEQQQEEAAALVQHKLPPYVSSMDRLGDSELALVCSQRPASLSQSPRVGFLSSLLPQSKKSPSRLSPAQGPPQAQSSAKKDTFSSQATKGKDPVPGAKDGKSLLSGPVPGEASWTHQRQRRLQDHGKERRELLSTSSSQTQCAEKKLEGSGPEAELCLDLHMGPVEALARVSTAGSEGDRPEQPFIVLSQEEYGEHHSSIMHCRVDCSGRRVASLDVDGVIKVWSFNPIMQTKASSISKSPLLSLEWATKRDRLLLLGSGVGTVRLYDTEAKKNLCEININDDMPRILSLACSPNGASFVCSAAAPSLTSQPDSSAPDIGSKGMNQVPGKLLLWDTKTMKQQLQFSLDPEPIAINCTAFNHNGNLLVTGAADGVIRLFDMQQHGCAMSWKAHCGEVYSVEFSYDENAVNSIGEDGKFIQWNIHKSGLKVSEYSLPSDATGPFVLSGYSGYKQVQVPRGRLFAFDSEGNYMLTCSATGGLIYKLGSEEKVLENCLSLGGHRAPVVTVDWSTAMDCGTCLTASMDGKIKLTTLLAHKL.

Positions Q183–L227 form a coiled coil. Residue S256 is modified to Phosphoserine. Residues L265–P278 are compositionally biased toward low complexity. The tract at residues L265–L358 is disordered. Over residues P283–T299 the composition is skewed to polar residues. S288 is modified (phosphoserine). The segment covering R332 to L343 has biased composition (basic and acidic residues). Residues L344 to C353 show a composition bias toward polar residues. 7 WD repeats span residues E406–A445, I448–E488, V511–Q555, P560–S599, A602–S641, V664–E702, and G709–L747.

Belongs to the WD repeat WDR91 family. Interacts with WDR81; involved in early to late endosome cargo transport. Interacts with BECN1; negatively regulates the PI3 kinase/PI3K activity associated with endosomal membranes.

It localises to the early endosome membrane. The protein localises to the late endosome membrane. Functionally, functions as a negative regulator of the PI3 kinase/PI3K activity associated with endosomal membranes via BECN1, a core subunit of the PI3K complex. By modifying the phosphatidylinositol 3-phosphate/PtdInsP3 content of endosomal membranes may regulate endosome fusion, recycling, sorting and early to late endosome transport. It is for instance, required for the delivery of cargos like BST2/tetherin from early to late endosome and thereby participates indirectly to their degradation by the lysosome. May play a role in meiosis. This chain is WD repeat-containing protein 91, found in Rattus norvegicus (Rat).